A 307-amino-acid polypeptide reads, in one-letter code: tRNA dimethylallyltransferase 1 (307 aa).

Gly11–Thr18 is an ATP binding site. Residue Thr13–Thr18 coordinates substrate. Interaction with substrate tRNA regions lie at residues Asp36 to Gln39 and Gln159 to Arg163.

Belongs to the IPP transferase family. Monomer. Mg(2+) serves as cofactor.

The catalysed reaction is adenosine(37) in tRNA + dimethylallyl diphosphate = N(6)-dimethylallyladenosine(37) in tRNA + diphosphate. Its function is as follows. Catalyzes the transfer of a dimethylallyl group onto the adenine at position 37 in tRNAs that read codons beginning with uridine, leading to the formation of N6-(dimethylallyl)adenosine (i(6)A). The polypeptide is tRNA dimethylallyltransferase 1 (Parabacteroides distasonis (strain ATCC 8503 / DSM 20701 / CIP 104284 / JCM 5825 / NCTC 11152)).